We begin with the raw amino-acid sequence, 2555 residues long: Ubiquitin carboxyl-terminal hydrolase 9Y (2555 aa).

Positions 1-66 are disordered; it reads MTAITHGSPV…APPQHEDEEP (66 aa). A compositionally biased stretch (polar residues) spans 13 to 45; sequence NDSQGQVLDGQSQHLFQQNQTSSPDSSNENSVA. Position 589 is a phosphoserine (serine 589). Threonine 591 carries the post-translational modification Phosphothreonine. Residues 972 to 997 form a disordered region; it reads NMPSSPDSSSDSSTASPGNHRNHYND. The span at 974-984 shows a compositional bias: low complexity; that stretch reads PSSPDSSSDSS. The USP domain maps to 1559–1958; sequence VGLKNAGATC…NAYILFYEQM (400 aa). The active-site Nucleophile is cysteine 1568. Zn(2+) contacts are provided by cysteine 1729, histidine 1731, cysteine 1773, and cysteine 1776. Histidine 1881 acts as the Proton acceptor in catalysis. At serine 2444 the chain carries Phosphoserine. Residues 2476-2485 are compositionally biased toward acidic residues; it reads PEEEPDDQDA. The segment at 2476 to 2555 is disordered; that stretch reads PEEEPDDQDA…EVSSPQMKDQ (80 aa). Composition is skewed to polar residues over residues 2504-2514 and 2528-2555; these read PASQYQQNNHV and NNPQKTGQRTQENYEGNEEVSSPQMKDQ. Tyrosine 2541 is subject to Phosphotyrosine. Serine 2548 bears the Phosphoserine mark.

Belongs to the peptidase C19 family. As to expression, widely expressed in embryonic and adult tissues.

It carries out the reaction Thiol-dependent hydrolysis of ester, thioester, amide, peptide and isopeptide bonds formed by the C-terminal Gly of ubiquitin (a 76-residue protein attached to proteins as an intracellular targeting signal).. The protein operates within protein modification; protein ubiquitination. Its function is as follows. Deubiquitinase that mediates deubiquitination of target proteins. May stabilize target proteins that are important for male germ cell development. The sequence is that of Ubiquitin carboxyl-terminal hydrolase 9Y from Homo sapiens (Human).